The following is a 108-amino-acid chain: Tetrahydromethanopterin S-methyltransferase subunit B (108 aa).

Residues 77–99 traverse the membrane as a helical segment; sequence FQGMFFGFWVTMAVLVLVTILAV.

Belongs to the MtrB family. As to quaternary structure, the complex is composed of 8 subunits; MtrA, MtrB, MtrC, MtrD, MtrE, MtrF, MtrG and MtrH.

It is found in the cell membrane. It carries out the reaction 5-methyl-5,6,7,8-tetrahydromethanopterin + coenzyme M + 2 Na(+)(in) = 5,6,7,8-tetrahydromethanopterin + methyl-coenzyme M + 2 Na(+)(out). It participates in one-carbon metabolism; methanogenesis from CO(2); methyl-coenzyme M from 5,10-methylene-5,6,7,8-tetrahydromethanopterin: step 2/2. Functionally, part of a complex that catalyzes the formation of methyl-coenzyme M and tetrahydromethanopterin from coenzyme M and methyl-tetrahydromethanopterin. This is an energy-conserving, sodium-ion translocating step. This is Tetrahydromethanopterin S-methyltransferase subunit B from Methanococcus maripaludis (strain DSM 14266 / JCM 13030 / NBRC 101832 / S2 / LL).